Here is a 282-residue protein sequence, read N- to C-terminus: Purine nucleoside phosphorylase (282 aa).

Phosphate-binding positions include S46, H78, and 103–105 (RTH). Residue E204 is part of the active site. E204 is a binding site for a purine D-ribonucleoside. S223 lines the phosphate pocket. A purine D-ribonucleoside is bound at residue N246.

It belongs to the PNP/MTAP phosphorylase family. As to quaternary structure, homotrimer.

The catalysed reaction is a purine 2'-deoxy-D-ribonucleoside + phosphate = a purine nucleobase + 2-deoxy-alpha-D-ribose 1-phosphate. The protein operates within purine metabolism; purine nucleoside salvage. Functionally, the purine nucleoside phosphorylases catalyze the phosphorolytic breakdown of the N-glycosidic bond in the beta-(deoxy)ribonucleoside molecules, with the formation of the corresponding free purine bases and pentose-1-phosphate. Cleaves guanosine, inosine, 2'-deoxyguanosine and 2'-deoxyinosine. This chain is Purine nucleoside phosphorylase (punA), found in Cellulomonas sp.